We begin with the raw amino-acid sequence, 108 residues long: MSDTHDDRVKQLVEFLDPLVDDSFKIKFNELSKYSKEELKQHTQKLEDWALALGVAEQKQLQTGRLLGIISDFNEFNCENTNHHQQQQNHQNQQQQQQQPNGIFENNI.

The segment at 81–108 (TNHHQQQQNHQNQQQQQQQPNGIFENNI) is disordered. Over residues 83–99 (HHQQQQNHQNQQQQQQQ) the composition is skewed to low complexity.

This is an uncharacterized protein from Dictyostelium discoideum (Social amoeba).